Reading from the N-terminus, the 219-residue chain is Large ribosomal subunit protein uL3 (219 aa).

Disordered regions lie at residues 62 to 81 and 136 to 156; these read DSRSSKYANKPAEGHAKKAG and QARGPMSHGSHFHRAPGSVGM.

This sequence belongs to the universal ribosomal protein uL3 family. In terms of assembly, part of the 50S ribosomal subunit. Forms a cluster with proteins L14 and L19.

Its function is as follows. One of the primary rRNA binding proteins, it binds directly near the 3'-end of the 23S rRNA, where it nucleates assembly of the 50S subunit. The protein is Large ribosomal subunit protein uL3 of Staphylococcus saprophyticus subsp. saprophyticus (strain ATCC 15305 / DSM 20229 / NCIMB 8711 / NCTC 7292 / S-41).